We begin with the raw amino-acid sequence, 313 residues long: Porphobilinogen deaminase (313 aa).

At Cys-243 the chain carries S-(dipyrrolylmethanemethyl)cysteine.

It belongs to the HMBS family. In terms of assembly, monomer. Dipyrromethane serves as cofactor.

The catalysed reaction is 4 porphobilinogen + H2O = hydroxymethylbilane + 4 NH4(+). It functions in the pathway porphyrin-containing compound metabolism; protoporphyrin-IX biosynthesis; coproporphyrinogen-III from 5-aminolevulinate: step 2/4. Its function is as follows. Tetrapolymerization of the monopyrrole PBG into the hydroxymethylbilane pre-uroporphyrinogen in several discrete steps. The sequence is that of Porphobilinogen deaminase from Bordetella petrii (strain ATCC BAA-461 / DSM 12804 / CCUG 43448).